Reading from the N-terminus, the 235-residue chain is 1-(5-phosphoribosyl)-5-[(5-phosphoribosylamino)methylideneamino] imidazole-4-carboxamide isomerase (235 aa).

Asp-8 functions as the Proton acceptor in the catalytic mechanism. The Proton donor role is filled by Asp-127.

It belongs to the HisA/HisF family.

It is found in the cytoplasm. The catalysed reaction is 1-(5-phospho-beta-D-ribosyl)-5-[(5-phospho-beta-D-ribosylamino)methylideneamino]imidazole-4-carboxamide = 5-[(5-phospho-1-deoxy-D-ribulos-1-ylimino)methylamino]-1-(5-phospho-beta-D-ribosyl)imidazole-4-carboxamide. It participates in amino-acid biosynthesis; L-histidine biosynthesis; L-histidine from 5-phospho-alpha-D-ribose 1-diphosphate: step 4/9. The polypeptide is 1-(5-phosphoribosyl)-5-[(5-phosphoribosylamino)methylideneamino] imidazole-4-carboxamide isomerase (Nautilia profundicola (strain ATCC BAA-1463 / DSM 18972 / AmH)).